A 140-amino-acid chain; its full sequence is Nucleoside diphosphate kinase (140 aa).

Residues Lys11, Phe59, Arg87, Thr93, Arg104, and Asn114 each coordinate ATP. His117 (pros-phosphohistidine intermediate) is an active-site residue.

The protein belongs to the NDK family. As to quaternary structure, homotetramer. Mg(2+) serves as cofactor.

It is found in the cytoplasm. The catalysed reaction is a 2'-deoxyribonucleoside 5'-diphosphate + ATP = a 2'-deoxyribonucleoside 5'-triphosphate + ADP. The enzyme catalyses a ribonucleoside 5'-diphosphate + ATP = a ribonucleoside 5'-triphosphate + ADP. Its function is as follows. Major role in the synthesis of nucleoside triphosphates other than ATP. The ATP gamma phosphate is transferred to the NDP beta phosphate via a ping-pong mechanism, using a phosphorylated active-site intermediate. The polypeptide is Nucleoside diphosphate kinase (Rhizobium etli (strain CIAT 652)).